The primary structure comprises 365 residues: Keratin-associated protein 10-6 (365 aa).

29 tandem repeats follow at residues 41–45, 46–50, 67–71, 89–93, 99–103, 109–113, 114–118, 119–123, 124–128, 129–133, 135–139, 145–149, 155–159, 160–164, 172–176, 186–190, 208–212, 218–222, 228–232, 233–237, 238–242, 250–254, 260–264, 270–274, 282–286, 292–296, 297–301, 316–320, and 334–338. The 29 X 5 AA repeats of C-C-X(3) stretch occupies residues 41–338; that stretch reads CCEPPCCAPA…SCQPSCCRTA (298 aa).

It belongs to the KRTAP type 10 family. As to quaternary structure, interacts with hair keratins. In terms of tissue distribution, restricted to a narrow region of the hair fiber cuticle, lying approximately 20 cell layers above the apex of the dermal papilla of the hair root; not detected in any other tissues.

In the hair cortex, hair keratin intermediate filaments are embedded in an interfilamentous matrix, consisting of hair keratin-associated proteins (KRTAP), which are essential for the formation of a rigid and resistant hair shaft through their extensive disulfide bond cross-linking with abundant cysteine residues of hair keratins. The matrix proteins include the high-sulfur and high-glycine-tyrosine keratins. The chain is Keratin-associated protein 10-6 (KRTAP10-6) from Homo sapiens (Human).